A 413-amino-acid polypeptide reads, in one-letter code: Type IV pilus assembly protein TapC (413 aa).

4 helical membrane passes run tyrosine 180–isoleucine 200, phenylalanine 227–valine 247, leucine 286–alanine 306, and isoleucine 386–phenylalanine 406.

It belongs to the GSP F family.

It is found in the cell inner membrane. Involved in the translocation of the type IV pilin. The polypeptide is Type IV pilus assembly protein TapC (tapC) (Aeromonas hydrophila).